The primary structure comprises 340 residues: Glycerol-3-phosphate dehydrogenase [NAD(P)+] (340 aa).

NADPH is bound by residues Trp-11, Arg-33, and Lys-110. The sn-glycerol 3-phosphate site is built by Lys-110, Gly-144, and Ser-146. Residue Ala-148 participates in NADPH binding. Sn-glycerol 3-phosphate is bound by residues Lys-199, Asp-252, Ser-262, Arg-263, and Asn-264. Lys-199 acts as the Proton acceptor in catalysis. Arg-263 is a binding site for NADPH. NADPH contacts are provided by Val-287 and Glu-289.

This sequence belongs to the NAD-dependent glycerol-3-phosphate dehydrogenase family.

It localises to the cytoplasm. It carries out the reaction sn-glycerol 3-phosphate + NAD(+) = dihydroxyacetone phosphate + NADH + H(+). The enzyme catalyses sn-glycerol 3-phosphate + NADP(+) = dihydroxyacetone phosphate + NADPH + H(+). It participates in membrane lipid metabolism; glycerophospholipid metabolism. Functionally, catalyzes the reduction of the glycolytic intermediate dihydroxyacetone phosphate (DHAP) to sn-glycerol 3-phosphate (G3P), the key precursor for phospholipid synthesis. The polypeptide is Glycerol-3-phosphate dehydrogenase [NAD(P)+] (Polynucleobacter necessarius subsp. necessarius (strain STIR1)).